The primary structure comprises 173 residues: Ribosome maturation factor RimM (173 aa).

A PRC barrel domain is found at 98–170; it reads EDEYYWCDLI…RMLITPLEGL (73 aa).

This sequence belongs to the RimM family. In terms of assembly, binds ribosomal protein uS19.

Its subcellular location is the cytoplasm. In terms of biological role, an accessory protein needed during the final step in the assembly of 30S ribosomal subunit, possibly for assembly of the head region. Essential for efficient processing of 16S rRNA. May be needed both before and after RbfA during the maturation of 16S rRNA. It has affinity for free ribosomal 30S subunits but not for 70S ribosomes. The sequence is that of Ribosome maturation factor RimM from Pelobacter propionicus (strain DSM 2379 / NBRC 103807 / OttBd1).